We begin with the raw amino-acid sequence, 481 residues long: Glutamyl-tRNA(Gln) amidotransferase subunit A (481 aa).

Active-site charge relay system residues include lysine 74 and serine 149. Serine 173 serves as the catalytic Acyl-ester intermediate.

This sequence belongs to the amidase family. GatA subfamily. As to quaternary structure, heterotrimer of A, B and C subunits.

It carries out the reaction L-glutamyl-tRNA(Gln) + L-glutamine + ATP + H2O = L-glutaminyl-tRNA(Gln) + L-glutamate + ADP + phosphate + H(+). Functionally, allows the formation of correctly charged Gln-tRNA(Gln) through the transamidation of misacylated Glu-tRNA(Gln) in organisms which lack glutaminyl-tRNA synthetase. The reaction takes place in the presence of glutamine and ATP through an activated gamma-phospho-Glu-tRNA(Gln). The protein is Glutamyl-tRNA(Gln) amidotransferase subunit A of Francisella tularensis subsp. novicida (strain U112).